The following is a 202-amino-acid chain: Probable nicotinate-nucleotide adenylyltransferase (202 aa).

It belongs to the NadD family.

The catalysed reaction is nicotinate beta-D-ribonucleotide + ATP + H(+) = deamido-NAD(+) + diphosphate. Its pathway is cofactor biosynthesis; NAD(+) biosynthesis; deamido-NAD(+) from nicotinate D-ribonucleotide: step 1/1. Catalyzes the reversible adenylation of nicotinate mononucleotide (NaMN) to nicotinic acid adenine dinucleotide (NaAD). This is Probable nicotinate-nucleotide adenylyltransferase from Clostridium perfringens (strain 13 / Type A).